A 1674-amino-acid chain; its full sequence is E3 ubiquitin-protein ligase SHPRH (1674 aa).

Positions 1–26 (MSSRRKRAPPMKVDEERQQQLHWNMH) are disordered. Over residues 12–26 (KVDEERQQQLHWNMH) the composition is skewed to basic and acidic residues. 2 positions are modified to phosphoserine: Ser-259 and Ser-261. Positions 302–384 (YQREAVNWML…TVEVLALILT (83 aa)) constitute a Helicase ATP-binding; first part domain. 368–375 (DEMGLGKT) contributes to the ATP binding site. The region spanning 433–507 (HCPPTRVMIL…GFSGTFTLGK (75 aa)) is the H15 domain. The disordered stretch occupies residues 524-548 (SPRKIEKELRKSVNKDADSEYLPSN). A compositionally biased stretch (basic and acidic residues) spans 526–541 (RKIEKELRKSVNKDAD). Position 626 is a phosphoserine (Ser-626). The PHD-type zinc finger occupies 649–700 (RFECICGEFDQIGHKPRVQCLKCHLWQHAKCVNYEEKNLKVKPFYCPHCLVA). A Helicase ATP-binding; second part domain is found at 701–859 (MEPVSTRATL…FGLVVFLGIE (159 aa)). The DEAQ box motif lies at 810-813 (DEAQ). The RING-type zinc-finger motif lies at 1423-1470 (CPICARQLGKQWAVLTCGHCFCNECTSIIIEQYSVGSHRSSIKCAICR). One can recognise a Helicase C-terminal domain in the interval 1505 to 1663 (AVVRTLMKIQ…ASVLTVAGLA (159 aa)).

This sequence belongs to the SNF2/RAD54 helicase family. Homodimer. Interacts with HLTF, PCNA, UBE2N and RAD18. In terms of tissue distribution, broadly expressed (at protein level).

The enzyme catalyses S-ubiquitinyl-[E2 ubiquitin-conjugating enzyme]-L-cysteine + [acceptor protein]-L-lysine = [E2 ubiquitin-conjugating enzyme]-L-cysteine + N(6)-ubiquitinyl-[acceptor protein]-L-lysine.. It functions in the pathway protein modification; protein ubiquitination. In terms of biological role, E3 ubiquitin-protein ligase involved in DNA repair. Upon genotoxic stress, accepts ubiquitin from the UBE2N-UBE2V2 E2 complex and transfers it to 'Lys-164' of PCNA which had been monoubiquitinated by UBE2A/B-RAD18, promoting the formation of non-canonical poly-ubiquitin chains linked through 'Lys-63'. The protein is E3 ubiquitin-protein ligase SHPRH (Shprh) of Mus musculus (Mouse).